Here is a 504-residue protein sequence, read N- to C-terminus: ATP synthase subunit alpha (504 aa).

Position 169–176 (169–176 (GDRQIGKT)) interacts with ATP.

It belongs to the ATPase alpha/beta chains family. As to quaternary structure, F-type ATPases have 2 components, CF(1) - the catalytic core - and CF(0) - the membrane proton channel. CF(1) has five subunits: alpha(3), beta(3), gamma(1), delta(1), epsilon(1). CF(0) has three main subunits: a(1), b(2) and c(9-12). The alpha and beta chains form an alternating ring which encloses part of the gamma chain. CF(1) is attached to CF(0) by a central stalk formed by the gamma and epsilon chains, while a peripheral stalk is formed by the delta and b chains.

Its subcellular location is the cell membrane. The catalysed reaction is ATP + H2O + 4 H(+)(in) = ADP + phosphate + 5 H(+)(out). Functionally, produces ATP from ADP in the presence of a proton gradient across the membrane. The alpha chain is a regulatory subunit. The protein is ATP synthase subunit alpha of Syntrophomonas wolfei subsp. wolfei (strain DSM 2245B / Goettingen).